Reading from the N-terminus, the 113-residue chain is Hydrogenase maturation factor HypA (113 aa).

Position 2 (His-2) interacts with Ni(2+). 4 residues coordinate Zn(2+): Cys-73, Cys-76, Cys-89, and Cys-92.

Belongs to the HypA/HybF family.

In terms of biological role, involved in the maturation of [NiFe] hydrogenases. Required for nickel insertion into the metal center of the hydrogenase. This is Hydrogenase maturation factor HypA from Actinobacillus succinogenes (strain ATCC 55618 / DSM 22257 / CCUG 43843 / 130Z).